A 320-amino-acid polypeptide reads, in one-letter code: Cytochrome f (320 aa).

A signal peptide spans 1–35 (MQTRNTLSWIKEEITRSISVSLMIYIITWASISNA). 4 residues coordinate heme: Tyr36, Cys56, Cys59, and His60. Residues 286–306 (VQGLLFFLASVVLAQIFLVLK) traverse the membrane as a helical segment.

The protein belongs to the cytochrome f family. As to quaternary structure, the 4 large subunits of the cytochrome b6-f complex are cytochrome b6, subunit IV (17 kDa polypeptide, petD), cytochrome f and the Rieske protein, while the 4 small subunits are PetG, PetL, PetM and PetN. The complex functions as a dimer. Heme serves as cofactor.

Its subcellular location is the plastid. The protein resides in the chloroplast thylakoid membrane. In terms of biological role, component of the cytochrome b6-f complex, which mediates electron transfer between photosystem II (PSII) and photosystem I (PSI), cyclic electron flow around PSI, and state transitions. The polypeptide is Cytochrome f (Carica papaya (Papaya)).